Consider the following 308-residue polypeptide: Mycothiol acetyltransferase (308 aa).

A disordered region spans residues 1 to 20 (MTSDDTAQPSGARRIETRPD). N-acetyltransferase domains are found at residues 15–152 (IETR…RSLT) and 165–308 (VTVR…RSET). Glu-47 is a 1D-myo-inositol 2-(L-cysteinylamino)-2-deoxy-alpha-D-glucopyranoside binding site. 91–93 (LVV) lines the acetyl-CoA pocket. 1D-myo-inositol 2-(L-cysteinylamino)-2-deoxy-alpha-D-glucopyranoside is bound by residues Glu-192, Lys-231, and Glu-240. Acetyl-CoA-binding positions include 244–246 (VGV) and 251–257 (QGGGLGK). Tyr-278 provides a ligand contact to 1D-myo-inositol 2-(L-cysteinylamino)-2-deoxy-alpha-D-glucopyranoside.

The protein belongs to the acetyltransferase family. MshD subfamily. In terms of assembly, monomer.

The enzyme catalyses 1D-myo-inositol 2-(L-cysteinylamino)-2-deoxy-alpha-D-glucopyranoside + acetyl-CoA = mycothiol + CoA + H(+). Functionally, catalyzes the transfer of acetyl from acetyl-CoA to desacetylmycothiol (Cys-GlcN-Ins) to form mycothiol. The sequence is that of Mycothiol acetyltransferase from Streptomyces scabiei (strain 87.22).